The primary structure comprises 143 residues: Hemoglobin subunit alpha-A (143 aa).

A Globin domain is found at 2–143 (SLSGKDKSVV…LALALAERYR (142 aa)). An O2-binding site is contributed by H60. H89 is a binding site for heme b.

Belongs to the globin family. Heterotetramer of two alpha chains and two beta chains. As to expression, red blood cells.

Functionally, involved in oxygen transport from gills to the various peripheral tissues. In Seriola quinqueradiata (Five-ray yellowtail), this protein is Hemoglobin subunit alpha-A (hbaa).